Consider the following 32-residue polypeptide: MASEIFGTAAIFWVLIPIGLVGGALLLKLEGD.

The helical transmembrane segment at 5 to 25 (IFGTAAIFWVLIPIGLVGGAL) threads the bilayer.

This sequence belongs to the PetM family. As to quaternary structure, the 4 large subunits of the cytochrome b6-f complex are cytochrome b6, subunit IV (17 kDa polypeptide, PetD), cytochrome f and the Rieske protein, while the 4 small subunits are PetG, PetL, PetM and PetN. The complex functions as a dimer.

Its subcellular location is the cellular thylakoid membrane. Its function is as follows. Component of the cytochrome b6-f complex, which mediates electron transfer between photosystem II (PSII) and photosystem I (PSI), cyclic electron flow around PSI, and state transitions. The polypeptide is Cytochrome b6-f complex subunit 7 (Synechococcus sp. (strain CC9902)).